A 443-amino-acid chain; its full sequence is F-box only protein 39 (443 aa).

The F-box domain maps to 13–59 (QSCWATLPDVCLRRVFWWLGDRDRSRAALVCRKWNQIMYSADLWRYR).

As to quaternary structure, directly interacts with SKP1 and CUL1.

Its function is as follows. Substrate-recognition component of the SCF (SKP1-CUL1-F-box protein)-type E3 ubiquitin ligase complex. In Rattus norvegicus (Rat), this protein is F-box only protein 39 (Fbxo39).